Here is a 1413-residue protein sequence, read N- to C-terminus: DNA-directed RNA polymerase subunit beta' (1413 aa).

Zn(2+) is bound by residues Cys-70, Cys-72, Cys-85, and Cys-88. Mg(2+) contacts are provided by Asp-461, Asp-463, and Asp-465. Zn(2+)-binding residues include Cys-820, Cys-894, Cys-901, and Cys-904.

The protein belongs to the RNA polymerase beta' chain family. The RNAP catalytic core consists of 2 alpha, 1 beta, 1 beta' and 1 omega subunit. When a sigma factor is associated with the core the holoenzyme is formed, which can initiate transcription. The cofactor is Mg(2+). Requires Zn(2+) as cofactor.

The catalysed reaction is RNA(n) + a ribonucleoside 5'-triphosphate = RNA(n+1) + diphosphate. Functionally, DNA-dependent RNA polymerase catalyzes the transcription of DNA into RNA using the four ribonucleoside triphosphates as substrates. In Cupriavidus metallidurans (strain ATCC 43123 / DSM 2839 / NBRC 102507 / CH34) (Ralstonia metallidurans), this protein is DNA-directed RNA polymerase subunit beta'.